The primary structure comprises 494 residues: Flavin-containing monooxygenase ustF2 (494 aa).

The first 21 residues, 1–21 (MANPQTTRVAVVGAGISGVLA), serve as a signal peptide directing secretion. An FAD-binding site is contributed by 13–18 (GAGISG). Positions 73 to 93 (EPSYPAMKPSKADPPATNEQE) are disordered. Residue 250–255 (GGGVSS) participates in NADP(+) binding. Asparagine 459 carries N-linked (GlcNAc...) asparagine glycosylation.

It belongs to the FMO family.

It participates in mycotoxin biosynthesis. Its function is as follows. Flavin-containing monooxygenase; part of the gene cluster that mediates the biosynthesis of the secondary metabolite ustiloxin B, an antimitotic tetrapeptide. First, ustA is processed by the subtilisin-like endoprotease Kex2 that is outside the ustiloxin B gene cluster, at the C-terminal side of Arg-Lys, after transfer to Golgi apparatus through the endoplasmic reticulum (ER). Cleavage by KEX2 generates 16 peptides YAIG-I to YAIG-XVI. To process the precursor peptide further, at least two peptidases are necessary to cleave the N-terminal and C-terminal sides of the Tyr-Ala-Ile-Gly core peptide which serves as backbone for the synthesis of ustiloxin B, through cyclization and modification of the tyrosine with a non-protein coding amino acid, norvaline. One of the two peptidases must be the serine peptidase ustP; and the other pepdidase is probably ustH. Macrocyclization of the core peptide derived from ustA requires the tyrosinase ustQ, as well as the homologous oxidases ustYa and ustYb, and leads to the production of the first cyclization product N-desmethylustiloxin F. For the formation of N-desmethylustiloxin F, three oxidation steps are required, hydroxylation at the benzylic position, hydroxylation at either the aromatic ring of Tyr or beta-position of Ile, and oxidative cyclization. UstQ may catalyze the oxidation of a phenol moiety, whereas the ustYa and ustYb are most likely responsible for the remaining two-step oxidations. N-desmethylustiloxin F is then methylated by ustM to yield ustiloxin F which in turn substrate of the cytochrome P450 monooxygenase ustC which catalyzes the formation of S-deoxyustiloxin H. The flavoprotein monooxygenases ustF1 and ustF2 then participate in the modification of the side chain of S-deoxyustiloxin H, leading to the synthesis of an oxime intermediate, via ustiloxin H. Finally, carboxylative dehydration performed by the cysteine desulfurase-like protein ustD yields ustiloxin B. The sequence is that of Flavin-containing monooxygenase ustF2 from Aspergillus flavus (strain ATCC 200026 / FGSC A1120 / IAM 13836 / NRRL 3357 / JCM 12722 / SRRC 167).